Here is an 859-residue protein sequence, read N- to C-terminus: DNA mismatch repair protein MutS (859 aa).

622–629 (GPNMGGKS) lines the ATP pocket.

This sequence belongs to the DNA mismatch repair MutS family.

Its function is as follows. This protein is involved in the repair of mismatches in DNA. It is possible that it carries out the mismatch recognition step. This protein has a weak ATPase activity. In Coxiella burnetii (strain Dugway 5J108-111), this protein is DNA mismatch repair protein MutS.